Here is a 219-residue protein sequence, read N- to C-terminus: UPF0173 metal-dependent hydrolase Mlab_1154 (219 aa).

It belongs to the UPF0173 family.

The sequence is that of UPF0173 metal-dependent hydrolase Mlab_1154 from Methanocorpusculum labreanum (strain ATCC 43576 / DSM 4855 / Z).